The sequence spans 97 residues: MDSSSSSSAAGLGSVDPQLQHFIEVETQKQRFQQLVHQMTELCWEKCMDKPGPKLDSRAEACFVNCVERFIDTSQFILNRLEQTQKSKPVFSESLSD.

The short motif at 43-66 (CWEKCMDKPGPKLDSRAEACFVNC) is the Twin CX3C motif element. Disulfide bonds link Cys-43/Cys-66 and Cys-47/Cys-62. Ser-57, Ser-87, Ser-94, and Ser-96 each carry phosphoserine.

The protein belongs to the small Tim family. Heterohexamer; composed of 3 copies of TIMM8A and 3 copies of TIMM13, named soluble 70 kDa complex. Associates with the TIM22 complex, whose core is composed of TIMM22.

The protein localises to the mitochondrion inner membrane. Functionally, mitochondrial intermembrane chaperone that participates in the import and insertion of some multi-pass transmembrane proteins into the mitochondrial inner membrane. Also required for the transfer of beta-barrel precursors from the TOM complex to the sorting and assembly machinery (SAM complex) of the outer membrane. Acts as a chaperone-like protein that protects the hydrophobic precursors from aggregation and guide them through the mitochondrial intermembrane space. The TIMM8-TIMM13 complex mediates the import of proteins such as TIMM23, SLC25A12/ARALAR1 and SLC25A13/ARALAR2, while the predominant TIMM9-TIMM10 70 kDa complex mediates the import of much more proteins. In Bos taurus (Bovine), this protein is Mitochondrial import inner membrane translocase subunit Tim8 A (TIMM8A).